A 102-amino-acid chain; its full sequence is Monothiol glutaredoxin-S5 (102 aa).

Residues 1 to 101 (MENLQKMISE…PMLKRAGALW (101 aa)) enclose the Glutaredoxin domain. Residue Cys-21 participates in [2Fe-2S] cluster binding. The Responsive for interaction with TGA factors signature appears at 99-102 (ALWL).

The protein belongs to the glutaredoxin family. CC-type subfamily.

The protein localises to the cytoplasm. The protein resides in the nucleus. May only reduce GSH-thiol disulfides, but not protein disulfides. In Arabidopsis thaliana (Mouse-ear cress), this protein is Monothiol glutaredoxin-S5 (GRXS5).